The sequence spans 268 residues: Hydroxyethylthiazole kinase (268 aa).

M44 is a binding site for substrate. The ATP site is built by R119 and S165. G192 lines the substrate pocket.

It belongs to the Thz kinase family. Mg(2+) is required as a cofactor.

It catalyses the reaction 5-(2-hydroxyethyl)-4-methylthiazole + ATP = 4-methyl-5-(2-phosphooxyethyl)-thiazole + ADP + H(+). The protein operates within cofactor biosynthesis; thiamine diphosphate biosynthesis; 4-methyl-5-(2-phosphoethyl)-thiazole from 5-(2-hydroxyethyl)-4-methylthiazole: step 1/1. Catalyzes the phosphorylation of the hydroxyl group of 4-methyl-5-beta-hydroxyethylthiazole (THZ). The sequence is that of Hydroxyethylthiazole kinase from Corynebacterium glutamicum (strain R).